Consider the following 64-residue polypeptide: Large ribosomal subunit protein bL35 (64 aa).

Residues 1-29 are disordered; that stretch reads MPKMKTHSGAKKRFKLTGSGKLRRQQANR.

It belongs to the bacterial ribosomal protein bL35 family.

The sequence is that of Large ribosomal subunit protein bL35 from Pseudarthrobacter chlorophenolicus (strain ATCC 700700 / DSM 12829 / CIP 107037 / JCM 12360 / KCTC 9906 / NCIMB 13794 / A6) (Arthrobacter chlorophenolicus).